A 63-amino-acid chain; its full sequence is MKANELREKSAQQLNEQLLGLLRDQFNLRMQKATGQLGQSHLLSQVKRDIARVKTVLNQQAGK.

Belongs to the universal ribosomal protein uL29 family.

This chain is Large ribosomal subunit protein uL29, found in Pseudomonas fluorescens (strain ATCC BAA-477 / NRRL B-23932 / Pf-5).